A 485-amino-acid polypeptide reads, in one-letter code: uncharacterized protein (485 aa).

13 consecutive transmembrane segments (helical) span residues 13-33, 38-58, 79-99, 111-131, 160-180, 211-231, 234-254, 297-317, 321-341, 365-385, 388-408, 420-440, and 445-465; these read WSAL…VILS, PFEF…DMLA, ALYW…IILS, LSFL…GQQY, VIIG…LLTV, LLFS…SSIT, IVAR…FNVA, INFP…YLVF, WLFI…RMVA, IIIF…VGAA, FLIC…KPVL, FIPF…DIYI, and LTFF…TIFI.

This sequence belongs to the polysaccharide synthase family.

Its subcellular location is the cell membrane. This is an uncharacterized protein from Klebsiella pneumoniae.